A 144-amino-acid polypeptide reads, in one-letter code: uncharacterized protein (144 aa).

This is an uncharacterized protein from Vibrio parahaemolyticus serotype O3:K6 (strain RIMD 2210633).